A 650-amino-acid polypeptide reads, in one-letter code: Putative secretin GspD (650 aa).

Residues 1-23 (MKGLNKITCCLLAALLMPCAGHA) form the signal peptide. The interval 24-122 (ENEQYGANFN…IADSSRPGVG (99 aa)) is N0. Residues 124–188 (ELVTRIVPLE…EVIKRVDVIG (65 aa)) form an N1 region. Positions 189 to 263 (TEKQQIIHLE…LLKSLDVEES (75 aa)) are N2. The N3 stretch occupies residues 266–342 (GNTRVYYLKY…KLATVIARLD (77 aa)). The segment at 345–596 (RAQVLVEAII…VFIRPTIIRD (252 aa)) is secretin. The tract at residues 598 to 650 (DVYRSLSKEKYTRYRQEQQQRIDGKSKALVGSEDLPVLDENTFNSHAPAPSSR) is s domain.

The protein belongs to the bacterial secretin family. GSP D subfamily. In terms of assembly, forms a cylindrical channel with 15 subunits; approximately 25% of the particles have 16-subunit channels. Closed pentadeacameric channels are 180 Angstroms long and 145 Angstroms in diameter. Each subunit turns in a clock-wise manner around the channel.

The protein resides in the cell outer membrane. Involved in a type II secretion system (T2SS, formerly general secretion pathway, GSP) for the export of folded proteins across the outer membrane. This subunit would form the outer membrane channel. This chain is Putative secretin GspD (gspD), found in Escherichia coli (strain K12).